Reading from the N-terminus, the 469-residue chain is Acetyl-CoA decarbonylase/synthase complex subunit beta 2 (469 aa).

The [Ni-Fe-S] cluster site is built by C187, C190, C276, and C278.

The protein belongs to the CdhC family. As to quaternary structure, monomer. The ACDS complex is made up of alpha, epsilon, beta, gamma and delta chains with a probable stoichiometry of (alpha(2)epsilon(2))(4)-beta(8)-(gamma(1)delta(1))(8) (Potential). The cofactor is [Ni-Fe-S] cluster.

It carries out the reaction Co(I)-[corrinoid Fe-S protein] + acetyl-CoA + H(+) = methyl-Co(III)-[corrinoid Fe-S protein] + CO + CoA. Part of a complex that catalyzes the reversible cleavage of acetyl-CoA, allowing autotrophic growth from CO(2). The alpha-epsilon complex generates CO from CO(2), while the beta subunit (this protein) combines the CO with CoA and a methyl group to form acetyl-CoA. The methyl group, which is incorporated into acetyl-CoA, is transferred to the beta subunit by a corrinoid iron-sulfur protein (the gamma-delta complex). The chain is Acetyl-CoA decarbonylase/synthase complex subunit beta 2 (cdhC2) from Methanocaldococcus jannaschii (strain ATCC 43067 / DSM 2661 / JAL-1 / JCM 10045 / NBRC 100440) (Methanococcus jannaschii).